A 347-amino-acid chain; its full sequence is NADH-ubiquinone oxidoreductase chain 2 (347 aa).

10 helical membrane-spanning segments follow: residues 3–23 (PPILIAILATVMTGTMIVMLS), 25–45 (HWLLIWIGFEMNMLAIIPILM), 66–86 (ASMLLMMGVTINLLYSGQWMI), 111–131 (FHFWVPEVTQGISLSSGMILL), 149–169 (INTDLMTLVALASVLVGGWGG), 178–198 (IMAYSSIAHMGWMAAIIIYNP), 201–221 (MFLNLSLYILMTLSTFMLFML), 237–257 (IPLIASTILTLMLSLGGLPPL), 274–294 (DMIVVPTLMAITALLNLYFYM), and 325–345 (LLPPLIITSTMLLPIMPMMSI).

Belongs to the complex I subunit 2 family. In terms of assembly, core subunit of respiratory chain NADH dehydrogenase (Complex I) which is composed of 45 different subunits. Interacts with TMEM242.

It localises to the mitochondrion inner membrane. It catalyses the reaction a ubiquinone + NADH + 5 H(+)(in) = a ubiquinol + NAD(+) + 4 H(+)(out). Functionally, core subunit of the mitochondrial membrane respiratory chain NADH dehydrogenase (Complex I) which catalyzes electron transfer from NADH through the respiratory chain, using ubiquinone as an electron acceptor. Essential for the catalytic activity and assembly of complex I. This is NADH-ubiquinone oxidoreductase chain 2 from Vulpes vulpes (Red fox).